We begin with the raw amino-acid sequence, 392 residues long: 23S rRNA (uracil(747)-C(5))-methyltransferase RlmC (392 aa).

Residues cysteine 4, cysteine 12, cysteine 15, and cysteine 93 each contribute to the [4Fe-4S] cluster site. Glutamine 218, phenylalanine 247, glutamate 275, and asparagine 321 together coordinate S-adenosyl-L-methionine. Cysteine 348 acts as the Nucleophile in catalysis.

This sequence belongs to the class I-like SAM-binding methyltransferase superfamily. RNA M5U methyltransferase family. RlmC subfamily.

It carries out the reaction uridine(747) in 23S rRNA + S-adenosyl-L-methionine = 5-methyluridine(747) in 23S rRNA + S-adenosyl-L-homocysteine + H(+). In terms of biological role, catalyzes the formation of 5-methyl-uridine at position 747 (m5U747) in 23S rRNA. The polypeptide is 23S rRNA (uracil(747)-C(5))-methyltransferase RlmC (Haemophilus influenzae (strain ATCC 51907 / DSM 11121 / KW20 / Rd)).